The chain runs to 258 residues: 4,5-dihydroxyphthalate decarboxylase (258 aa).

This sequence to P.testosteroni DHP decarboxylase.

It catalyses the reaction 4,5-dihydroxyphthalate + H(+) = 3,4-dihydroxybenzoate + CO2. It functions in the pathway xenobiotic degradation; phthalate degradation; 3,4-dihydroxybenzoate from phthalate: step 3/3. In Pseudomonas putida (Arthrobacter siderocapsulatus), this protein is 4,5-dihydroxyphthalate decarboxylase (pht5).